The following is a 100-amino-acid chain: Ubiquinol-cytochrome-C reductase complex subunit IX, mitochondrial (100 aa).

Residues 1-30 (MQTHVRRVALQALRPCLRAGLMAPKFPVRF) constitute a mitochondrion transit peptide. Residues 66-86 (LLMRLFFAFVAYVVAMKVFGA) form a helical membrane-spanning segment.

As to quaternary structure, plants bc1 complex contains 10 subunits; 3 respiratory subunits, 2 core proteins and 5 low-molecular weight proteins.

The protein localises to the mitochondrion inner membrane. In terms of biological role, this is a component of the ubiquinol-cytochrome c reductase complex (complex III or cytochrome b-c1 complex), which is part of the mitochondrial respiratory chain. This Euglena gracilis protein is Ubiquinol-cytochrome-C reductase complex subunit IX, mitochondrial.